Here is a 259-residue protein sequence, read N- to C-terminus: uncharacterized protein (259 aa).

This is an uncharacterized protein from Bacillus anthracis.